Reading from the N-terminus, the 158-residue chain is SsrA-binding protein (158 aa).

It belongs to the SmpB family.

It localises to the cytoplasm. Required for rescue of stalled ribosomes mediated by trans-translation. Binds to transfer-messenger RNA (tmRNA), required for stable association of tmRNA with ribosomes. tmRNA and SmpB together mimic tRNA shape, replacing the anticodon stem-loop with SmpB. tmRNA is encoded by the ssrA gene; the 2 termini fold to resemble tRNA(Ala) and it encodes a 'tag peptide', a short internal open reading frame. During trans-translation Ala-aminoacylated tmRNA acts like a tRNA, entering the A-site of stalled ribosomes, displacing the stalled mRNA. The ribosome then switches to translate the ORF on the tmRNA; the nascent peptide is terminated with the 'tag peptide' encoded by the tmRNA and targeted for degradation. The ribosome is freed to recommence translation, which seems to be the essential function of trans-translation. The protein is SsrA-binding protein of Caldicellulosiruptor bescii (strain ATCC BAA-1888 / DSM 6725 / KCTC 15123 / Z-1320) (Anaerocellum thermophilum).